Here is a 284-residue protein sequence, read N- to C-terminus: MNKFSFTKMHGLGNSYIYVNMFEETIPESLLSSLAVKVSNVNTGIGADGMILICPSEVAPVKMRIFNSDGSEGKNCGNGLRCVAKYAYEHGMVKDRSFFIETLSGLVKAEVTVENGAVTNVTIDMGKPRLKRSEIPMIGLDAERVVAEPFEVDGKQYEITAVSMGNPHVIFYVDDITTAPVTTLGPIVEKDERFPEGVNVEFVEVVNDHELHFRVWERGSGVTQACGTGACAAVVASVLNGKTARNKETVVHLAGGDLIITWTDEGNVRMTGPAETICTGVYYY.

2 residues coordinate substrate: asparagine 14 and asparagine 67. Cysteine 76 serves as the catalytic Proton donor. Substrate contacts are provided by residues 77 to 78 (GN), asparagine 166, asparagine 199, and 217 to 218 (ER). Cysteine 226 serves as the catalytic Proton acceptor. Residue 227-228 (GT) participates in substrate binding.

Belongs to the diaminopimelate epimerase family. Homodimer.

It localises to the cytoplasm. The catalysed reaction is (2S,6S)-2,6-diaminopimelate = meso-2,6-diaminopimelate. Its pathway is amino-acid biosynthesis; L-lysine biosynthesis via DAP pathway; DL-2,6-diaminopimelate from LL-2,6-diaminopimelate: step 1/1. Its function is as follows. Catalyzes the stereoinversion of LL-2,6-diaminopimelate (L,L-DAP) to meso-diaminopimelate (meso-DAP), a precursor of L-lysine and an essential component of the bacterial peptidoglycan. This Geobacillus sp. (strain WCH70) protein is Diaminopimelate epimerase.